A 372-amino-acid chain; its full sequence is NAD(P)H-quinone oxidoreductase subunit 1 (372 aa).

8 consecutive transmembrane segments (helical) span residues 29–49, 97–117, 128–148, 176–196, 204–224, 254–274, 308–328, and 351–371; these read WLPFPMLLMIVVATVGVLVTV, LLFTLGPVIVAVPVFLSYLVV, LGVAIFLWIALSSIQPIGLLM, LALAVLAVAMMSNSLSTIDIV, ILGWNIWRQPLGFIIFWIAVL, FALYYLASYVNLVLSSLLVAV, TLGIIMTLLKTYLLVFIAVLL, and VALVNLLLTAALKLTFPFAFG.

This sequence belongs to the complex I subunit 1 family. As to quaternary structure, NDH-1 is composed of at least 11 different subunits.

It is found in the cellular thylakoid membrane. It carries out the reaction a plastoquinone + NADH + (n+1) H(+)(in) = a plastoquinol + NAD(+) + n H(+)(out). The catalysed reaction is a plastoquinone + NADPH + (n+1) H(+)(in) = a plastoquinol + NADP(+) + n H(+)(out). NDH-1 shuttles electrons from an unknown electron donor, via FMN and iron-sulfur (Fe-S) centers, to quinones in the respiratory and/or the photosynthetic chain. The immediate electron acceptor for the enzyme in this species is believed to be plastoquinone. Couples the redox reaction to proton translocation, and thus conserves the redox energy in a proton gradient. The polypeptide is NAD(P)H-quinone oxidoreductase subunit 1 (Trichodesmium erythraeum (strain IMS101)).